The chain runs to 217 residues: Nucleolar protein 12 (217 aa).

Residues 34 to 98 (GFHKRKVERK…LVTAKTESVQ (65 aa)) adopt a coiled-coil conformation. The interval 122–217 (LGLPLPEQGD…MTGKARHNGE (96 aa)) is disordered. A compositionally biased stretch (acidic residues) spans 130–141 (GDQDGSQEEEMS). Basic residues-rich tracts occupy residues 172 to 184 (AHSRKKVKRKHPR) and 201 to 217 (KTQRRRRMTGKARHNGE).

This sequence belongs to the RRP17 family. In terms of assembly, interacts with KIAA1191. Expressed in brain, lung, spleen, kidney and heart.

The protein resides in the nucleus. It localises to the nucleolus. The protein localises to the cytoplasm. Its function is as follows. Multifunctional RNA binding protein that plays a role in RNA metabolism and DNA maintenance. Participates in the resolution of DNA stress and the maintenance of genome integrity by localizing to sites of DNA insults. Also plays a role in proper nucleolar organization by limiting nucleolar size and regulating nucleolar number. Mechanistically, regulates the nucleolar levels of fibrillarin and nucleolin, two key players in pre-rRNA processing and ribosome assembly. This Mus musculus (Mouse) protein is Nucleolar protein 12 (Nol12).